Here is a 1093-residue protein sequence, read N- to C-terminus: GPI ethanolamine phosphate transferase 3, catalytic subunit (1093 aa).

A helical transmembrane segment spans residues 4–24; sequence VSVLLFLAWVCFLFYAGIALF. The N-linked (GlcNAc...) asparagine glycan is linked to asparagine 268. 9 helical membrane passes run 460–480, 483–503, 512–532, 669–689, 702–722, 748–768, 831–851, 856–876, and 945–965; these read AAAC…GFLF, LLLI…GVSV, VVLG…KAWV, LWYG…RLWL, VLFV…YWAL, VMGL…TVLV, SVYS…LMLL, VSLV…LLAA, and FASH…PFLC. The tract at residues 971 to 991 is disordered; it reads KRRQPLPGSESEARVRPEEEE. 2 helical membrane-spanning segments follow: residues 1018 to 1038 and 1052 to 1072; these read LKYL…ASIL and FIFE…GIAL.

The protein belongs to the PIGG/PIGN/PIGO family. PIGO subfamily. As to quaternary structure, forms the ethanolamine phosphate transferase 3 complex composed by PIGO and PIGF. PIGF is required to stabilize PIGO.

It localises to the endoplasmic reticulum membrane. It participates in glycolipid biosynthesis; glycosylphosphatidylinositol-anchor biosynthesis. Catalytic subunit of the ethanolamine phosphate transferase 3 complex that transfers an ethanolamine phosphate (EtNP) from a phosphatidylethanolamine (PE) to the 6-OH position of the third alpha-1,2-linked mannose of the an alpha-D-Man-(1-&gt;2)-alpha-D-Man-(1-&gt;6)-2-PEtn-alpha-D-Man-(1-&gt;4)-alpha-D-GlcN-(1-&gt;6)-(1-radyl,2-acyl-sn-glycero-3-phospho)-2-acyl-inositol (also termed H6) intermediate to generate a 6-PEtn-alpha-D-Man-(1-&gt;2)-alpha-D-Man-(1-&gt;6)-2-PEtn-alpha-D-Man-(1-&gt;4)-alpha-D-GlcN-(1-&gt;6)-(1-radyl,2-acyl-sn-glycero-3-phospho)-2-acyl-inositol (also termed H7) and participates in the tenth step of the glycosylphosphatidylinositol-anchor biosynthesis. The sequence is that of GPI ethanolamine phosphate transferase 3, catalytic subunit from Mus musculus (Mouse).